The chain runs to 206 residues: Imidazoleglycerol-phosphate dehydratase (206 aa).

The disordered stretch occupies residues 1 to 24 (MDPTASGRQAPRNPRQATVQRETK).

It belongs to the imidazoleglycerol-phosphate dehydratase family.

Its subcellular location is the cytoplasm. The catalysed reaction is D-erythro-1-(imidazol-4-yl)glycerol 3-phosphate = 3-(imidazol-4-yl)-2-oxopropyl phosphate + H2O. Its pathway is amino-acid biosynthesis; L-histidine biosynthesis; L-histidine from 5-phospho-alpha-D-ribose 1-diphosphate: step 6/9. The polypeptide is Imidazoleglycerol-phosphate dehydratase (Acidothermus cellulolyticus (strain ATCC 43068 / DSM 8971 / 11B)).